We begin with the raw amino-acid sequence, 543 residues long: Chaperonin GroEL 1 (543 aa).

Residues 29 to 32, Lys-50, 86 to 90, Gly-414, and Asp-493 contribute to the ATP site; these read TLGP and DGTTT. The tract at residues 524 to 543 is disordered; that stretch reads KEDKGAPAGMGGMPPGGGMY. A compositionally biased stretch (gly residues) spans 531-543; sequence AGMGGMPPGGGMY.

The protein belongs to the chaperonin (HSP60) family. In terms of assembly, forms a cylinder of 14 subunits composed of two heptameric rings stacked back-to-back. Interacts with the co-chaperonin GroES.

Its subcellular location is the cytoplasm. It carries out the reaction ATP + H2O + a folded polypeptide = ADP + phosphate + an unfolded polypeptide.. Functionally, together with its co-chaperonin GroES, plays an essential role in assisting protein folding. The GroEL-GroES system forms a nano-cage that allows encapsulation of the non-native substrate proteins and provides a physical environment optimized to promote and accelerate protein folding. This chain is Chaperonin GroEL 1, found in Syntrophobacter fumaroxidans (strain DSM 10017 / MPOB).